A 1319-amino-acid chain; its full sequence is Uromodulin-like 1 (1319 aa).

An N-terminal signal peptide occupies residues 1–22 (MMSRTVRLVLLALACTVDLSQA). The Extracellular segment spans residues 23-1273 (SGFTENGLSL…CTKPVLGTGY (1251 aa)). Residues 34 to 107 (SYQLCSYPVT…FEQLGLYCVL (74 aa)) form the EMI domain. 3 cysteine pairs are disulfide-bonded: C38/C95, C62/C71, and C94/C105. An N-linked (GlcNAc...) asparagine glycan is attached at N90. An N-linked (GlcNAc...) asparagine glycan is attached at N110. A WAP domain is found at 115 to 159 (FASRPGVCPTAEAEPLSPSCSLDTDCSGLQKCCSWPGGRHCVSPT). Residues N172, N193, and N243 are each glycosylated (N-linked (GlcNAc...) asparagine). Residues 265–306 (DVNECLHSELQACSVREQCRNLEGSYQCVSSQRLNHTDEDCP) form the EGF-like 1; calcium-binding domain. Intrachain disulfides connect C269-C283 and C277-C292. Residues 307–391 (PIRDFVALNV…ATLVVKTDAQ (85 aa)) enclose the Fibronectin type-III 1 domain. N315 carries N-linked (GlcNAc...) asparagine glycosylation. The SEA 1 domain maps to 389–503 (DAQVFQVTIR…QRTFVQDWDE (115 aa)). One can recognise an EGF-like 2; calcium-binding domain in the interval 500–545 (DWDECAHSSEHDCHPSARCINLEGSYTCQCLTARDASPSRAGRVCE). Cystine bridges form between C504–C518, C512–C527, and C529–C544. 2 disordered regions span residues 569-649 (TGIT…ITKD) and 664-703 (HSSP…PESP). Low complexity predominate over residues 619-632 (TGQGQTHGTHQGTT). Over residues 638–647 (TTRESQELIT) the composition is skewed to basic and acidic residues. Residues 664–678 (HSSPTWKTPPNSTRL) show a composition bias toward polar residues. Positions 709-795 (PIGKVTVSNV…QLKVRTVAQK (87 aa)) constitute a Fibronectin type-III 2 domain. N-linked (GlcNAc...) asparagine glycosylation is found at N717 and N757. Residues 792–904 (VAQKLAGNVR…GKTFMQDYNE (113 aa)) enclose the SEA 2 domain. Residues 901–945 (DYNECDMKEDDCAPGTCRNTFGSFTCSCDEGGPDSQVEYSGRSCD) enclose the EGF-like 3; calcium-binding domain. Cystine bridges form between C905/C917, C912/C926, and C928/C944. The tract at residues 939–966 (YSGRSCDGDPSGNMTQTPGSEWSPTPAG) is disordered. Residues 950 to 961 (GNMTQTPGSEWS) are compositionally biased toward polar residues. The N-linked (GlcNAc...) asparagine glycan is linked to N951. The region spanning 995–1238 (SCEIETVIIT…NSCRISCNDF (244 aa)) is the ZP domain. Cysteines 1160 and 1218 form a disulfide. The helical transmembrane segment at 1274 to 1294 (IILLAAAALLVVAGATTLLIL) threads the bilayer. Residues 1295–1319 (RYQRVRQKYNLRIQTDDFSYQVFSQ) lie on the Cytoplasmic side of the membrane.

It localises to the cell membrane. The sequence is that of Uromodulin-like 1 (Umodl1) from Mus musculus (Mouse).